A 398-amino-acid chain; its full sequence is ATP-dependent RNA helicase eIF4A (398 aa).

A Q motif motif is present at residues 25 to 53 (DSFDSMELKPELLRGVYAYGFERPSAIQQ). The Helicase ATP-binding domain maps to 56–226 (ILPIVKGNDV…TKFMRDPVRI (171 aa)). ATP is bound at residue 69–76 (AQSGTGKT). A DEAD box motif is present at residues 174–177 (DEAD). The region spanning 237–398 (GIKQFYIAVE…EMPMNVADLI (162 aa)) is the Helicase C-terminal domain.

This sequence belongs to the DEAD box helicase family. eIF4A subfamily. Component of the eIF4F complex, which composition varies with external and internal environmental conditions. It is composed of at least eIF4A, eIF4E and eIF4G.

Its subcellular location is the cytoplasm. It catalyses the reaction ATP + H2O = ADP + phosphate + H(+). Functionally, ATP-dependent RNA helicase which is a subunit of the eIF4F complex involved in cap recognition and is required for mRNA binding to ribosome. In the current model of translation initiation, eIF4A unwinds RNA secondary structures in the 5'-UTR of mRNAs which is necessary to allow efficient binding of the small ribosomal subunit, and subsequent scanning for the initiator codon. In Emericella nidulans (strain FGSC A4 / ATCC 38163 / CBS 112.46 / NRRL 194 / M139) (Aspergillus nidulans), this protein is ATP-dependent RNA helicase eIF4A (tif1).